The following is a 171-amino-acid chain: Methylated-DNA--protein-cysteine methyltransferase (171 aa).

Cys-139 (nucleophile; methyl group acceptor) is an active-site residue.

It belongs to the MGMT family.

It localises to the cytoplasm. The enzyme catalyses a 6-O-methyl-2'-deoxyguanosine in DNA + L-cysteinyl-[protein] = S-methyl-L-cysteinyl-[protein] + a 2'-deoxyguanosine in DNA. It carries out the reaction a 4-O-methyl-thymidine in DNA + L-cysteinyl-[protein] = a thymidine in DNA + S-methyl-L-cysteinyl-[protein]. Functionally, involved in the cellular defense against the biological effects of O6-methylguanine (O6-MeG) and O4-methylthymine (O4-MeT) in DNA. Repairs the methylated nucleobase in DNA by stoichiometrically transferring the methyl group to a cysteine residue in the enzyme. This is a suicide reaction: the enzyme is irreversibly inactivated. The polypeptide is Methylated-DNA--protein-cysteine methyltransferase (Salmonella typhi).